Consider the following 116-residue polypeptide: Large ribosomal subunit protein bL19 (116 aa).

It belongs to the bacterial ribosomal protein bL19 family.

Its function is as follows. This protein is located at the 30S-50S ribosomal subunit interface and may play a role in the structure and function of the aminoacyl-tRNA binding site. The polypeptide is Large ribosomal subunit protein bL19 (Staphylococcus aureus (strain USA300)).